Consider the following 58-residue polypeptide: Large ribosomal subunit protein uL30 (58 aa).

This sequence belongs to the universal ribosomal protein uL30 family. Part of the 50S ribosomal subunit.

In Psychromonas ingrahamii (strain DSM 17664 / CCUG 51855 / 37), this protein is Large ribosomal subunit protein uL30.